The following is a 99-amino-acid chain: Malonate decarboxylase acyl carrier protein (99 aa).

Ser25 carries the O-(phosphoribosyl dephospho-coenzyme A)serine modification.

Belongs to the MdcC family. Post-translationally, covalently binds the prosthetic group of malonate decarboxylase.

The protein localises to the cytoplasm. Functionally, subunit of malonate decarboxylase, it is an acyl carrier protein to which acetyl and malonyl thioester residues are bound via a 2'-(5''-phosphoribosyl)-3'-dephospho-CoA prosthetic group and turn over during the catalytic mechanism. This chain is Malonate decarboxylase acyl carrier protein, found in Pseudomonas putida (strain GB-1).